Reading from the N-terminus, the 608-residue chain is UvrABC system protein C (608 aa).

A GIY-YIG domain is found at 13-91 (HDAGVYRMYD…IKTYQPRYNV (79 aa)). Residues 201–236 (QQVLEHLIHKMEQASLALDFEEAARIRDQIQAVRAV) form the UVR domain.

The protein belongs to the UvrC family. Interacts with UvrB in an incision complex.

The protein localises to the cytoplasm. Functionally, the UvrABC repair system catalyzes the recognition and processing of DNA lesions. UvrC both incises the 5' and 3' sides of the lesion. The N-terminal half is responsible for the 3' incision and the C-terminal half is responsible for the 5' incision. In Pasteurella multocida (strain Pm70), this protein is UvrABC system protein C.